We begin with the raw amino-acid sequence, 267 residues long: Cilia- and flagella-associated protein 300 (267 aa).

It belongs to the CFAP300 family. In terms of assembly, interacts with DNAAF2. Expressed in nasal epithelial cells.

The protein resides in the cytoplasm. It is found in the cytoskeleton. Its subcellular location is the cilium axoneme. Functionally, cilium- and flagellum-specific protein that plays a role in axonemal structure organization and motility. May play a role in outer and inner dynein arm assembly. The sequence is that of Cilia- and flagella-associated protein 300 from Homo sapiens (Human).